Consider the following 659-residue polypeptide: Cysteine-rich receptor-like protein kinase 18 (659 aa).

The first 27 residues, 1 to 27 (MATKSCELVLCFFVFFVISFSAISVSA), serve as a signal peptide directing secretion. Gnk2-homologous domains follow at residues 28–131 (QTCD…NRPF) and 137–250 (MDPL…VYPF). The Extracellular portion of the chain corresponds to 28 to 287 (QTCDNTTGTF…KNDSRISGGK (260 aa)). N-linked (GlcNAc...) asparagine glycosylation is found at asparagine 32, asparagine 57, asparagine 152, asparagine 162, asparagine 179, asparagine 180, asparagine 197, asparagine 275, and asparagine 279. Residues 288 to 308 (IAAIVVVTVVTIILVVLGFVI) traverse the membrane as a helical segment. The Cytoplasmic segment spans residues 309–659 (SNRRKQKQEM…EATITDVNPR (351 aa)). Residues 339 to 611 (FSERNKLGKG…PTMSTIHQML (273 aa)) enclose the Protein kinase domain. Residues 345–353 (LGKGGFGEV) and lysine 367 each bind ATP. The residue at position 412 (tyrosine 412) is a Phosphotyrosine. Aspartate 464 acts as the Proton acceptor in catalysis. The residue at position 468 (serine 468) is a Phosphoserine. Threonine 504 carries the phosphothreonine modification. The residue at position 512 (tyrosine 512) is a Phosphotyrosine.

Belongs to the protein kinase superfamily. Ser/Thr protein kinase family. CRK subfamily.

The protein resides in the membrane. It catalyses the reaction L-seryl-[protein] + ATP = O-phospho-L-seryl-[protein] + ADP + H(+). The catalysed reaction is L-threonyl-[protein] + ATP = O-phospho-L-threonyl-[protein] + ADP + H(+). The chain is Cysteine-rich receptor-like protein kinase 18 (CRK18) from Arabidopsis thaliana (Mouse-ear cress).